The chain runs to 188 residues: GTPase KRas (188 aa).

Residues 10–18, 29–35, 59–60, and 116–119 contribute to the GTP site; these read GAGGVGKSA, VDEYDPT, AG, and NKCD. Residues 32 to 40 carry the Effector region motif; sequence YDPTIEDSY. Residues 168–188 are disordered; sequence EKMSKDGKKKKKKTKTKCIIM. At Cys-185 the chain carries Cysteine methyl ester. The S-farnesyl cysteine moiety is linked to residue Cys-185. The propeptide at 186–188 is removed in mature form; that stretch reads IIM.

This sequence belongs to the small GTPase superfamily. Ras family.

It localises to the cell membrane. The protein resides in the cytoplasm. The catalysed reaction is GTP + H2O = GDP + phosphate + H(+). Its activity is regulated as follows. Alternates between an inactive form bound to GDP and an active form bound to GTP. Activated by a guanine nucleotide-exchange factor (GEF) and inactivated by a GTPase-activating protein (GAP). Ras proteins bind GDP/GTP and possess intrinsic GTPase activity. Plays an important role in the regulation of cell proliferation. May play a role in promoting oncogenic events by inducing transcriptional silencing of tumor suppressor genes (TSGs). The polypeptide is GTPase KRas (KRAS) (Meleagris gallopavo (Wild turkey)).